Reading from the N-terminus, the 69-residue chain is Toxin Tma2 (69 aa).

The 65-residue stretch at 2 to 66 (KDDYPVDTAE…SPTKTSKRCN (65 aa)) folds into the LCN-type CS-alpha/beta domain. Cystine bridges form between C14/C65, C18/C41, C27/C48, and C31/C50.

It belongs to the long (4 C-C) scorpion toxin superfamily. Sodium channel inhibitor family. As to expression, expressed by the venom gland.

The protein localises to the secreted. Functionally, inhibits voltage-gated sodium channels (Nav). This toxin shows insect lethality against crickets. In Tityus macrochirus (Scorpion), this protein is Toxin Tma2.